We begin with the raw amino-acid sequence, 465 residues long: Respiratory transcription factor ZNF1 (465 aa).

Positions 8–34 (CDCCCIRRVKCDRKKPCKCCLQHNLQC) form a DNA-binding region, zn(2)-C6 fungal-type.

Belongs to the MAL13 family.

It localises to the nucleus. In terms of biological role, transcription factor that regulates respiratory growth and plays a critical role in stress adaptation during non-fermentative growth. Binds to promoters of genes involved in non-fermentative metabolism, including processes such as gluconeogenesis (PCK1, FBP1 and MDH2), glyoxylate shunt (MLS1 and ICL1) and the tricarboxylic acid cycle (ACO1). Plays a role in maintaining mitochondrial morphology and function. Also plays a role in tolerance to pH and osmotic stress, especially during the oxidative metabolism. The chain is Respiratory transcription factor ZNF1 from Saccharomyces cerevisiae (strain ATCC 204508 / S288c) (Baker's yeast).